The sequence spans 80 residues: MATSGRLLCLCLVLGLVFESLGHPGARLPKDGKRAVSTRHAHDDPFAHEVNCGGFPCMFSCCENDVCMELNCEYFPSLGQ.

Positions 1–21 (MATSGRLLCLCLVLGLVFESL) are cleaved as a signal peptide. Residues 22–34 (GHPGARLPKDGKR) constitute a propeptide that is removed on maturation.

Belongs to the teretoxin M (TM) superfamily. In terms of processing, contains 3 disulfide bonds. In terms of tissue distribution, expressed by the venom duct.

The protein resides in the secreted. The protein is Teretoxin Tan6.1 of Terebra anilis (Auger snail).